The sequence spans 238 residues: uncharacterized protein (238 aa).

Belongs to the chlamydial CPn_0658/CT_538/TC_0825 family.

This is an uncharacterized protein from Chlamydia muridarum (strain MoPn / Nigg).